Here is a 686-residue protein sequence, read N- to C-terminus: Protein-glutamine gamma-glutamyltransferase 2 (686 aa).

The residue at position 2 (Ala-2) is an N-acetylalanine. 2 disulfides stabilise this stretch: Cys-230-Cys-370 and Cys-370-Cys-371. Catalysis depends on residues Cys-277, His-335, and Asp-358. Asn-398, Asp-400, Glu-437, Glu-447, and Glu-452 together coordinate Ca(2+). The residue at position 468 (Lys-468) is an N6-acetyllysine. 476–483 (RIRVGDSM) serves as a coordination point for GTP. Position 538 (Glu-538) interacts with Ca(2+). Position 579 to 582 (579 to 582 (RDLY)) interacts with GTP. Residue Gln-632 forms an Isoglutamyl lysine isopeptide (Gln-Lys) (interchain with K-?) linkage.

It belongs to the transglutaminase superfamily. Transglutaminase family. In terms of assembly, monomer. Interacts with phospholipase C; promoting alpha-1 adrenergic receptor signaling. Interacts with PLCD1. It depends on Ca(2+) as a cofactor. In terms of processing, disulfide bond formation inactivates the calcium-dependent acyltransferase activity. Cys-370 can form disulfide bonds with both Cys-230 and Cys-371: formation of a disulfide bond between Cys-230 and Cys-370 facilitates formation of the disulfide between Cys-370 and Cys-371, which promotes inactivation of the acyltransferase activity. May also form interchain disulfids between Cys-230 and Cys-370. Ca(2+) protects against disulfide bond formation and inactivation. Post-translationally, auto-transglutaminated: Forms covalent cross-links mediated by transglutaminase between Gln-632 and the epsilon-amino group of a lysine residue of itself or HMGB1, forming homopolymers and heteropolymers, respectively. S-nitrosylated, leading to inactivation of the acyltransferase activity.

The protein resides in the cytoplasm. The protein localises to the cytosol. It is found in the nucleus. Its subcellular location is the chromosome. It localises to the secreted. The protein resides in the extracellular space. The protein localises to the extracellular matrix. It is found in the cell membrane. Its subcellular location is the mitochondrion. It carries out the reaction L-glutaminyl-[protein] + L-lysyl-[protein] = [protein]-L-lysyl-N(6)-5-L-glutamyl-[protein] + NH4(+). It catalyses the reaction L-glutaminyl-[protein] + serotonin = 5-serotonyl-L-glutamyl-[protein] + NH4(+). The enzyme catalyses L-glutaminyl-[protein] + dopamine = 5-dopaminyl-L-glutamyl-[protein] + NH4(+). The catalysed reaction is L-glutaminyl-[protein] + histamine = 5-histaminyl-L-glutamyl-[protein] + NH4(+). It carries out the reaction L-glutaminyl-[protein] + (R)-noradrenaline = 5-(R)-noradrenalinyl-L-glutamyl-[protein] + NH4(+). It catalyses the reaction L-glutaminyl-[protein] + H2O = L-glutamyl-[protein] + NH4(+). Its activity is regulated as follows. Acyltransferase activity is regulated by the binding of GTP and Ca(2+): inactivated by GTP, which stabilizes its closed structure, thereby obstructing the accessibility of substrates to the active sites. In contrast, Ca(2+) acts as a cofactor by inducing conformational change to the active open form. In absence of Ca(2+), Mg(2+) may bind Ca(2+)-binding sites, promoting GTP-binding and subsequent inhibition of the acyltransferase activity. Extracellularly reduced and activated by CLIC3. In terms of biological role, calcium-dependent acyltransferase that catalyzes the formation of covalent bonds between peptide-bound glutamine and various primary amines, such as gamma-amino group of peptide-bound lysine, or mono- and polyamines, thereby producing cross-linked or aminated proteins, respectively. Involved in many biological processes, such as bone development, angiogenesis, wound healing, cellular differentiation, chromatin modification and apoptosis. Acts as a protein-glutamine gamma-glutamyltransferase by mediating the cross-linking of proteins, such as ACO2, HSPB6, FN1, HMGB1, RAP1GDS1, SLC25A4/ANT1, SPP1 and WDR54. Under physiological conditions, the protein cross-linking activity is inhibited by GTP; inhibition is relieved by Ca(2+) in response to various stresses. When secreted, catalyzes cross-linking of proteins of the extracellular matrix, such as FN1 and SPP1 resulting in the formation of scaffolds. Plays a key role during apoptosis, both by (1) promoting the cross-linking of cytoskeletal proteins resulting in condensation of the cytoplasm, and by (2) mediating cross-linking proteins of the extracellular matrix, resulting in the irreversible formation of scaffolds that stabilize the integrity of the dying cells before their clearance by phagocytosis, thereby preventing the leakage of harmful intracellular components. In addition to protein cross-linking, can use different monoamine substrates to catalyze a vast array of protein post-translational modifications: mediates aminylation of serotonin, dopamine, noradrenaline or histamine into glutamine residues of target proteins to generate protein serotonylation, dopaminylation, noradrenalinylation or histaminylation, respectively. Mediates protein serotonylation of small GTPases during activation and aggregation of platelets, leading to constitutive activation of these GTPases. Plays a key role in chromatin organization by mediating serotonylation and dopaminylation of histone H3. Catalyzes serotonylation of 'Gln-5' of histone H3 (H3Q5ser) during serotonergic neuron differentiation, thereby facilitating transcription. Acts as a mediator of neurotransmission-independent role of nuclear dopamine in ventral tegmental area (VTA) neurons: catalyzes dopaminylation of 'Gln-5' of histone H3 (H3Q5dop), thereby regulating relapse-related transcriptional plasticity in the reward system. Regulates vein remodeling by mediating serotonylation and subsequent inactivation of ATP2A2/SERCA2. Also acts as a protein deamidase by mediating the side chain deamidation of specific glutamine residues of proteins to glutamate. Catalyzes specific deamidation of protein gliadin, a component of wheat gluten in the diet. May also act as an isopeptidase cleaving the previously formed cross-links. Also able to participate in signaling pathways independently of its acyltransferase activity: acts as a signal transducer in alpha-1 adrenergic receptor-mediated stimulation of phospholipase C-delta (PLCD) activity and is required for coupling alpha-1 adrenergic agonists to the stimulation of phosphoinositide lipid metabolism. In Mus musculus (Mouse), this protein is Protein-glutamine gamma-glutamyltransferase 2.